The sequence spans 342 residues: Oxygen-dependent coproporphyrinogen-III oxidase (342 aa).

S107 is a binding site for substrate. A divalent metal cation is bound by residues H111 and H121. H121 acts as the Proton donor in catalysis. A substrate-binding site is contributed by 123 to 125 (NYR). A divalent metal cation contacts are provided by H155 and H185. An important for dimerization region spans residues 277–312 (YVEFNLVYDRGTIFGLQTNGRTESILMSLPPLVRWE).

It belongs to the aerobic coproporphyrinogen-III oxidase family. As to quaternary structure, homodimer. Requires a divalent metal cation as cofactor.

The protein localises to the cytoplasm. The enzyme catalyses coproporphyrinogen III + O2 + 2 H(+) = protoporphyrinogen IX + 2 CO2 + 2 H2O. The protein operates within porphyrin-containing compound metabolism; protoporphyrin-IX biosynthesis; protoporphyrinogen-IX from coproporphyrinogen-III (O2 route): step 1/1. Its function is as follows. Involved in the heme and chlorophyll biosynthesis. Catalyzes the aerobic oxidative decarboxylation of propionate groups of rings A and B of coproporphyrinogen-III to yield the vinyl groups in protoporphyrinogen-IX. The protein is Oxygen-dependent coproporphyrinogen-III oxidase of Synechococcus sp. (strain ATCC 27144 / PCC 6301 / SAUG 1402/1) (Anacystis nidulans).